A 1036-amino-acid polypeptide reads, in one-letter code: Multidrug resistance protein MdtC (1036 aa).

10 helical membrane-spanning segments follow: residues 12-34 (VATTLLSLAITLCGVLGFTLLPV), 336-353 (RALVIAIGLVILVVFLFL), 360-382 (LIPAIAVPVSLIGTFTAMYLCGF), 431-450 (VGFTVLSMSISLVAVFIPLL), 463-485 (FAITLTTSISISLLVSLTLTPMM), 528-547 (WVLLILAGIIALNVWLYINI), 853-875 (LFLILAAIITVYLVLGILYESYI), 895-917 (LELFDTPFSLIALIGIMLLIGIV), 949-971 (LRFRPILMTTLAALFGSLPLVLS), and 986-1008 (IVGGLVMSQLLTLYTTPVVYLCF).

This sequence belongs to the resistance-nodulation-cell division (RND) (TC 2.A.6) family. MdtC subfamily. In terms of assembly, part of a tripartite efflux system composed of MdtA, MdtB and MdtC. MdtC forms a heteromultimer with MdtB.

The protein resides in the cell inner membrane. The protein is Multidrug resistance protein MdtC of Photorhabdus laumondii subsp. laumondii (strain DSM 15139 / CIP 105565 / TT01) (Photorhabdus luminescens subsp. laumondii).